Consider the following 118-residue polypeptide: DNA-binding protein inhibitor ID-3-B (118 aa).

One can recognise a bHLH domain in the interval 32-84 (SLKGAGIDETMGLLYDMNGCYSKLKELVPGIPQGSKLSQVEILQHVIDYIFDL).

As to quaternary structure, homodimer. Heterodimer with other HLH proteins. Interacts (via HLH domain) with the bHLH protein hes4/hairy2 (via Orange domain). Interacts with stat3.

It is found in the nucleus. Transcriptional regulator (lacking a basic DNA binding domain) which negatively regulates the basic helix-loop-helix (bHLH) transcription factors by forming heterodimers and inhibiting their DNA binding and transcriptional activity. Influences cell fate decisions in the embryo by sequestering and blocking the activity of the bHLH transcription factors that control these decisions. Inhibits the binding of myogenic bHLH-containing complexes to E-box DNA, thereby preventing activation of muscle-specific target genes. Also inhibits the activity of neurogenic factor neurod1/neuroD. Plays a role in cell cycle progression and survival of neural crest progenitors; binding to either hes4-B/hairy2b or stat3 blocks the formation of transcription factor complexes and the repressor function of hes4-B/hairy2B, to allow neural crest progenitors to differentiate. May play a role in the regulation of the circadian rhythm. The protein is DNA-binding protein inhibitor ID-3-B (id3-b) of Xenopus laevis (African clawed frog).